A 406-amino-acid polypeptide reads, in one-letter code: Arginine biosynthesis bifunctional protein ArgJ (406 aa).

Substrate-binding residues include Thr152, Lys179, Thr190, Glu277, Asn401, and Ser406. The active-site Nucleophile is the Thr190.

This sequence belongs to the ArgJ family. In terms of assembly, heterotetramer of two alpha and two beta chains.

The protein localises to the cytoplasm. The catalysed reaction is N(2)-acetyl-L-ornithine + L-glutamate = N-acetyl-L-glutamate + L-ornithine. It catalyses the reaction L-glutamate + acetyl-CoA = N-acetyl-L-glutamate + CoA + H(+). The protein operates within amino-acid biosynthesis; L-arginine biosynthesis; L-ornithine and N-acetyl-L-glutamate from L-glutamate and N(2)-acetyl-L-ornithine (cyclic): step 1/1. Its pathway is amino-acid biosynthesis; L-arginine biosynthesis; N(2)-acetyl-L-ornithine from L-glutamate: step 1/4. Functionally, catalyzes two activities which are involved in the cyclic version of arginine biosynthesis: the synthesis of N-acetylglutamate from glutamate and acetyl-CoA as the acetyl donor, and of ornithine by transacetylation between N(2)-acetylornithine and glutamate. The chain is Arginine biosynthesis bifunctional protein ArgJ from Neisseria meningitidis serogroup A / serotype 4A (strain DSM 15465 / Z2491).